Consider the following 95-residue polypeptide: Ferredoxin-like protein FixX (95 aa).

The protein belongs to the bacterial-type ferredoxin family. FixX subfamily.

Could be part of an electron transfer system required for anaerobic carnitine reduction. Could be a 3Fe-4S cluster-containing protein. This is Ferredoxin-like protein FixX (fixX) from Escherichia coli O157:H7.